A 141-amino-acid polypeptide reads, in one-letter code: UPF0225 protein Rmet_0111 (141 aa).

It belongs to the UPF0225 family.

This is UPF0225 protein Rmet_0111 from Cupriavidus metallidurans (strain ATCC 43123 / DSM 2839 / NBRC 102507 / CH34) (Ralstonia metallidurans).